Here is a 178-residue protein sequence, read N- to C-terminus: UPF0302 protein BcerKBAB4_1445 (178 aa).

The protein belongs to the UPF0302 family.

The polypeptide is UPF0302 protein BcerKBAB4_1445 (Bacillus mycoides (strain KBAB4) (Bacillus weihenstephanensis)).